A 151-amino-acid chain; its full sequence is Deoxyuridine 5'-triphosphate nucleotidohydrolase (151 aa).

Residues 70 to 72, Asn-83, 87 to 89, and Met-97 contribute to the substrate site; these read RSG and LID.

It belongs to the dUTPase family. Mg(2+) serves as cofactor.

The enzyme catalyses dUTP + H2O = dUMP + diphosphate + H(+). The protein operates within pyrimidine metabolism; dUMP biosynthesis; dUMP from dCTP (dUTP route): step 2/2. Functionally, this enzyme is involved in nucleotide metabolism: it produces dUMP, the immediate precursor of thymidine nucleotides and it decreases the intracellular concentration of dUTP so that uracil cannot be incorporated into DNA. In Pseudomonas fluorescens (strain SBW25), this protein is Deoxyuridine 5'-triphosphate nucleotidohydrolase.